Here is a 146-residue protein sequence, read N- to C-terminus: Metallothiol transferase FosB (146 aa).

Residues 4–120 (GINHMTFSVS…DGHLLEVHTG (117 aa)) form the VOC domain. Mg(2+) contacts are provided by H7, H66, and E116. Residue E116 is the Proton donor/acceptor of the active site.

Belongs to the fosfomycin resistance protein family. FosB subfamily. Homodimer. Requires Mg(2+) as cofactor.

Its subcellular location is the cytoplasm. Metallothiol transferase which confers resistance to fosfomycin by catalyzing the addition of a thiol cofactor to fosfomycin. L-cysteine is probably the physiological thiol donor. In Shouchella clausii (strain KSM-K16) (Alkalihalobacillus clausii), this protein is Metallothiol transferase FosB.